Reading from the N-terminus, the 87-residue chain is Defensin-like protein 81 (87 aa).

Residues 1-27 (MTIKKFLPLLLSSLMVYSLILLPIISG) form the signal peptide. Intrachain disulfides connect Cys-33–Cys-69, Cys-37–Cys-57, Cys-43–Cys-67, and Cys-47–Cys-68.

It belongs to the DEFL family.

It localises to the secreted. This chain is Defensin-like protein 81, found in Arabidopsis thaliana (Mouse-ear cress).